The chain runs to 443 residues: Thymidine phosphorylase (443 aa).

The protein belongs to the thymidine/pyrimidine-nucleoside phosphorylase family. As to quaternary structure, homodimer.

It catalyses the reaction thymidine + phosphate = 2-deoxy-alpha-D-ribose 1-phosphate + thymine. The protein operates within pyrimidine metabolism; dTMP biosynthesis via salvage pathway; dTMP from thymine: step 1/2. Its function is as follows. The enzymes which catalyze the reversible phosphorolysis of pyrimidine nucleosides are involved in the degradation of these compounds and in their utilization as carbon and energy sources, or in the rescue of pyrimidine bases for nucleotide synthesis. This chain is Thymidine phosphorylase, found in Shewanella sp. (strain ANA-3).